The following is a 146-amino-acid chain: Hemoglobin subunit beta (146 aa).

T1 is subject to Blocked amino end (Thr). The Globin domain maps to 2–146; that stretch reads HWTAEERHYI…VAHALTLQYH (145 aa). Positions 63 and 92 each coordinate heme b.

This sequence belongs to the globin family. As to quaternary structure, heterotetramer of two alpha chains and two beta chains. Red blood cells.

Functionally, involved in oxygen transport from the lung to the various peripheral tissues. The protein is Hemoglobin subunit beta (HBB) of Caretta caretta (Loggerhead sea turtle).